The following is a 360-amino-acid chain: Sensor histidine kinase LiaS (360 aa).

Over 1–15 (MRKKMLASLQWRAIR) the chain is Cytoplasmic. A helical transmembrane segment spans residues 16-36 (MTTGISLLLFVCLISFMMFYY). At 37 to 47 (RLDPLVLLSSS) the chain is on the extracellular side. Residues 48–68 (WFGIPFILILLLISVTVGFAS) traverse the membrane as a helical segment. Residues 69 to 360 (GYMYGNRLKT…ENERDSSIID (292 aa)) are Cytoplasmic-facing. The region spanning 74–126 (NRLKTRIDTLIESILTFENGNFAYRIPPLGDDEIGLAADQLNEMAKRVELQVA) is the HAMP domain. In terms of domain architecture, Histidine kinase spans 153–346 (RLARDLHDAV…QIEVKVPIFP (194 aa)). Phosphohistidine; by autocatalysis is present on histidine 159.

It localises to the cell membrane. It carries out the reaction ATP + protein L-histidine = ADP + protein N-phospho-L-histidine.. In terms of biological role, member of the two-component regulatory system LiaS/LiaR probably involved in response to a subset of cell wall-active antibiotics that interfere with the lipid II cycle in the cytoplasmic membrane (bacitracin, nisin, ramoplanin and vancomycin). Also seems to be involved in response to cationic antimicrobial peptides and secretion stress. Activates probably LiaR by phosphorylation. This chain is Sensor histidine kinase LiaS (liaS), found in Bacillus subtilis (strain 168).